The chain runs to 161 residues: MPSFDVVSEVNKHELTNAVDQANRELDTRFDFKGVQAKFELEDGKVINQSAPSDFQVKQMTDILRARLLARGIDVRCLEFGDMETNLAGARQKVTVKQGIEQKQAKQLVAKLKEAKLKVEAQINGDKLRITGKKRDDLQDAIALLKKADFELPLQFDNFRD.

The protein belongs to the YajQ family.

Functionally, nucleotide-binding protein. In Xanthomonas oryzae pv. oryzae (strain MAFF 311018), this protein is Nucleotide-binding protein XOO0647.